Here is a 392-residue protein sequence, read N- to C-terminus: Magnesium-chelatase 38 kDa subunit (392 aa).

The span at Met-1–Ser-17 shows a compositional bias: low complexity. A disordered region spans residues Met-1–Glu-21. Gly-80 to Ser-87 contacts ATP.

The protein belongs to the Mg-chelatase subunits D/I family.

The enzyme catalyses protoporphyrin IX + Mg(2+) + ATP + H2O = Mg-protoporphyrin IX + ADP + phosphate + 3 H(+). It functions in the pathway porphyrin-containing compound metabolism; bacteriochlorophyll biosynthesis. Involved in bacteriochlorophyll biosynthesis; introduces a magnesium ion into protoporphyrin IX to yield Mg-protoporphyrin IX. The chain is Magnesium-chelatase 38 kDa subunit (bchI) from Chlorobaculum tepidum (strain ATCC 49652 / DSM 12025 / NBRC 103806 / TLS) (Chlorobium tepidum).